Consider the following 175-residue polypeptide: ATP synthase subunit b (175 aa).

The chain crosses the membrane as a helical span at residues 20 to 40 (LIFWTAITFVIVLLILKKIAW).

This sequence belongs to the ATPase B chain family. F-type ATPases have 2 components, F(1) - the catalytic core - and F(0) - the membrane proton channel. F(1) has five subunits: alpha(3), beta(3), gamma(1), delta(1), epsilon(1). F(0) has four main subunits: a(1), b(2) and c(10-14). The alpha and beta chains form an alternating ring which encloses part of the gamma chain. F(1) is attached to F(0) by a central stalk formed by the gamma and epsilon chains, while a peripheral stalk is formed by the delta and b chains.

The protein localises to the cell inner membrane. In terms of biological role, f(1)F(0) ATP synthase produces ATP from ADP in the presence of a proton or sodium gradient. F-type ATPases consist of two structural domains, F(1) containing the extramembraneous catalytic core and F(0) containing the membrane proton channel, linked together by a central stalk and a peripheral stalk. During catalysis, ATP synthesis in the catalytic domain of F(1) is coupled via a rotary mechanism of the central stalk subunits to proton translocation. Its function is as follows. Component of the F(0) channel, it forms part of the peripheral stalk, linking F(1) to F(0). This Chlorobium chlorochromatii (strain CaD3) protein is ATP synthase subunit b.